A 139-amino-acid polypeptide reads, in one-letter code: Nucleoside diphosphate kinase (139 aa).

The ATP site is built by K11, F59, R87, T93, R104, and N114. Residue H117 is the Pros-phosphohistidine intermediate of the active site.

It belongs to the NDK family. In terms of assembly, homotetramer. The cofactor is Mg(2+).

It localises to the cytoplasm. It carries out the reaction a 2'-deoxyribonucleoside 5'-diphosphate + ATP = a 2'-deoxyribonucleoside 5'-triphosphate + ADP. The catalysed reaction is a ribonucleoside 5'-diphosphate + ATP = a ribonucleoside 5'-triphosphate + ADP. In terms of biological role, major role in the synthesis of nucleoside triphosphates other than ATP. The ATP gamma phosphate is transferred to the NDP beta phosphate via a ping-pong mechanism, using a phosphorylated active-site intermediate. This chain is Nucleoside diphosphate kinase, found in Flavobacterium psychrophilum (strain ATCC 49511 / DSM 21280 / CIP 103535 / JIP02/86).